We begin with the raw amino-acid sequence, 176 residues long: Probable DNA-directed RNA polymerase subunit delta (176 aa).

Residues 14-81 (KSFIDMAYTL…GENLWGLRDW (68 aa)) form the HTH HARE-type domain. Residues 114-176 (LGEDEMDDDD…VFEDEEDFND (63 aa)) form a disordered region. 2 stretches are compositionally biased toward acidic residues: residues 116-145 (EDEM…QVEE) and 153-176 (VIEE…DFND).

It belongs to the RpoE family. In terms of assembly, RNAP is composed of a core of 2 alpha, a beta and a beta' subunits. The core is associated with a delta subunit and one of several sigma factors.

Its function is as follows. Participates in both the initiation and recycling phases of transcription. In the presence of the delta subunit, RNAP displays an increased specificity of transcription, a decreased affinity for nucleic acids, and an increased efficiency of RNA synthesis because of enhanced recycling. This Staphylococcus aureus (strain JH1) protein is Probable DNA-directed RNA polymerase subunit delta.